We begin with the raw amino-acid sequence, 260 residues long: Sulfoquinovose 1-dehydrogenase (260 aa).

Tyr160 acts as the Proton acceptor in catalysis.

The protein belongs to the short-chain dehydrogenases/reductases (SDR) family.

The enzyme catalyses 6-sulfo-D-quinovose + NAD(+) = 6-deoxy-6-sulfo-D-glucono-1,5-lactone + NADH + H(+). Its function is as follows. Catalyzes the oxidation of sulfoquinovose to 6-deoxy-6-sulfo-D-glucono-1,5-lactone, with a strong preference for NAD(+) as the electron acceptor. Is involved in a degradation pathway of sulfoquinovose (SQ) that allows P.putida SQ1 to use SQ as the sole carbon and energy source for growth. The protein is Sulfoquinovose 1-dehydrogenase of Pseudomonas putida (Arthrobacter siderocapsulatus).